The chain runs to 457 residues: D-hydantoinase (457 aa).

Zn(2+) is bound by residues histidine 57 and histidine 59. The residue at position 69 (serine 69) is a Phosphoserine. Lysine 148 contacts Zn(2+). Lysine 148 carries the post-translational modification N6-carboxylysine. Tyrosine 153 is a substrate binding site. Zn(2+)-binding residues include histidine 181 and histidine 237. Threonine 286 is a binding site for substrate. Aspartate 313 provides a ligand contact to Zn(2+). Position 335 (asparagine 335) interacts with substrate.

This sequence belongs to the metallo-dependent hydrolases superfamily. Hydantoinase/dihydropyrimidinase family. As to quaternary structure, homotetramer. Zn(2+) serves as cofactor. Post-translationally, carboxylation allows a single lysine to coordinate two zinc ions.

Functionally, catalyzes the stereospecific hydrolysis of the cyclic amide bond of D-hydantoin derivatives. The protein is D-hydantoinase (hyuA) of Rhizobium radiobacter (Agrobacterium tumefaciens).